The primary structure comprises 716 residues: Probable extracellular serine carboxypeptidase (716 aa).

Positions 1–17 are cleaved as a signal peptide; the sequence is MVKLTACLLLLVAAVQA. N-linked (GlcNAc...) asparagine glycans are attached at residues asparagine 143 and asparagine 174. Catalysis depends on serine 188, which acts as the Charge relay system. N-linked (GlcNAc...) asparagine glycosylation is found at asparagine 258 and asparagine 354. Aspartate 466 functions as the Charge relay system in the catalytic mechanism. 2 N-linked (GlcNAc...) asparagine glycosylation sites follow: asparagine 507 and asparagine 550. The interval 617–636 is disordered; that stretch reads RDLAAQPSKSKKDRRGQQLS. Residues 652 to 672 traverse the membrane as a helical segment; sequence LGFVSFLVFAFSSFTFIPDIE.

Belongs to the peptidase S28 family.

The protein localises to the membrane. It localises to the secreted. This chain is Probable extracellular serine carboxypeptidase, found in Arthroderma benhamiae (strain ATCC MYA-4681 / CBS 112371) (Trichophyton mentagrophytes).